Consider the following 235-residue polypeptide: Phosphoribosylformylglycinamidine synthase subunit PurQ (235 aa).

The region spanning 3–234 is the Glutamine amidotransferase type-1 domain; that stretch reads FGVLVFPGSN…LNSLMAQGVT (232 aa). Catalysis depends on Cys-86, which acts as the Nucleophile. Catalysis depends on residues His-203 and Glu-205.

As to quaternary structure, part of the FGAM synthase complex composed of 1 PurL, 1 PurQ and 2 PurS subunits.

The protein localises to the cytoplasm. The enzyme catalyses N(2)-formyl-N(1)-(5-phospho-beta-D-ribosyl)glycinamide + L-glutamine + ATP + H2O = 2-formamido-N(1)-(5-O-phospho-beta-D-ribosyl)acetamidine + L-glutamate + ADP + phosphate + H(+). It carries out the reaction L-glutamine + H2O = L-glutamate + NH4(+). Its pathway is purine metabolism; IMP biosynthesis via de novo pathway; 5-amino-1-(5-phospho-D-ribosyl)imidazole from N(2)-formyl-N(1)-(5-phospho-D-ribosyl)glycinamide: step 1/2. Its function is as follows. Part of the phosphoribosylformylglycinamidine synthase complex involved in the purines biosynthetic pathway. Catalyzes the ATP-dependent conversion of formylglycinamide ribonucleotide (FGAR) and glutamine to yield formylglycinamidine ribonucleotide (FGAM) and glutamate. The FGAM synthase complex is composed of three subunits. PurQ produces an ammonia molecule by converting glutamine to glutamate. PurL transfers the ammonia molecule to FGAR to form FGAM in an ATP-dependent manner. PurS interacts with PurQ and PurL and is thought to assist in the transfer of the ammonia molecule from PurQ to PurL. The sequence is that of Phosphoribosylformylglycinamidine synthase subunit PurQ from Acaryochloris marina (strain MBIC 11017).